The sequence spans 147 residues: MKVILKENVDNLGHIGDIVKVAPGYARNFLLPKGFAIEATEKNAKALEHAKRHLEYKKNKVLEAAKQLAAKIEGLSLSIAHQAGADDRLFGAVTNMELAEQLKANGIEMDRKRIVLAEPIKQLGDFTATVKIHPEVSATLKVAVTKA.

Belongs to the bacterial ribosomal protein bL9 family.

Functionally, binds to the 23S rRNA. This Citrifermentans bemidjiense (strain ATCC BAA-1014 / DSM 16622 / JCM 12645 / Bem) (Geobacter bemidjiensis) protein is Large ribosomal subunit protein bL9.